The following is a 503-amino-acid chain: SWI/SNF and RSC complexes subunit ssr2 (503 aa).

In terms of domain architecture, SWIRM spans 18-115 (IIVPSYAGWF…YQIDPETRPA (98 aa)). Ser175 bears the Phosphoserine mark. The segment at 188–242 (RVDKVCFTCGVNCSQTWYHNLKNKKYDICPNCYKQGRFSSSFNSSDFLCMDAIDF) adopts a ZZ-type; degenerate zinc-finger fold. The Zn(2+) site is built by Cys193, Cys196, Cys216, and Cys219. Residues 245–296 (DEEKPWSNQETLLLLEAIETYGDDWNQIALHVGSRTKEQCLIHFLQIPIEDP) form the SANT domain. The residue at position 306 (Ser306) is a Phosphoserine.

This sequence belongs to the SMARCC family. As to quaternary structure, component of the RSC complex composed of at least arp9, arp42, rsc1, rsc4, rsc7, rsc9, rsc58, sfh1, snf21, ssr1, ssr2, ssr3 and ssr4. The complex interacts with histone and histone variant components of centromeric chromatin. Component of the SWI/SNF global transcription activator complex composed of at least arp9, arp42, snf5, snf22, snf30, sbf59, sol1, ssr1, ssr2, ssr3, ssr4 and tfg3.

The protein resides in the cytoplasm. Its subcellular location is the nucleus. Functionally, component of the chromatin structure remodeling complex (RSC), which is involved in transcription regulation and nucleosome positioning. Controls particularly membrane and organelle development genes. Part of the SWI/SNF complex, an ATP-dependent chromatin remodeling complex, required for the positive and negative regulation of gene expression of a large number of genes. It changes chromatin structure by altering DNA-histone contacts within a nucleosome, leading eventually to a change in nucleosome position, thus facilitating or repressing binding of gene-specific transcription factors. The chain is SWI/SNF and RSC complexes subunit ssr2 (ssr2) from Schizosaccharomyces pombe (strain 972 / ATCC 24843) (Fission yeast).